Reading from the N-terminus, the 183-residue chain is (2E)-enoyl-[ACP] glycyltransferase (183 aa).

Belongs to the FcoT family.

It carries out the reaction a (3R)-3-[(carboxymethyl)amino]fatty acid + holo-[ACP] + H(+) = a (2E)-enoyl-[ACP] + glycine + H2O. The catalysed reaction is (3R)-3-[(carboxylmethyl)amino]decanoate + holo-[ACP] + H(+) = (2E)-decenoyl-[ACP] + glycine + H2O. The enzyme catalyses a fatty acyl-CoA + H2O = a fatty acid + CoA + H(+). Involved in the biosynthesis of a unique class of isonitrile lipopeptides (INLPs) that seem to play a role in metal acquisition. Catalyzes a Michael addition of glycine to the beta-position of an alpha,beta-unsaturated fatty acyl-[ACP], producing a (3R)-3-[(carboxymethyl)amino]fatty acid. Acts on the (2E)-decenoyl moiety loaded on the acyl-carrier protein (ACP) BQ2027_MB0103, forming the product (3R)-3-[(carboxymethyl)amino]decanoate released from the ACP. Displays thioesterase activity with a preference for long chain fatty acyl groups. This Mycobacterium bovis (strain ATCC BAA-935 / AF2122/97) protein is (2E)-enoyl-[ACP] glycyltransferase.